The chain runs to 376 residues: Adipocyte plasma membrane-associated protein (376 aa).

The helical transmembrane segment at 1-17 (MTFLMLAVSLAIPLLGA) threads the bilayer. Asn-120 carries an N-linked (GlcNAc...) asparagine glycan.

It belongs to the strictosidine synthase family.

It localises to the membrane. Exhibits strong arylesterase activity with beta-naphthyl acetate and phenyl acetate. May play a role in adipocyte differentiation. The protein is Adipocyte plasma membrane-associated protein (Apmap) of Rattus norvegicus (Rat).